A 278-amino-acid chain; its full sequence is MSRPERWTTAVLDVEAPGGLAVVQGDQGFLLDANGVMFPRGWLAGQDLPVQSEHGIGYFEGEPVYLLVLERSVAVEGCAWQGLRQFMLEGDFAVFQMLGYAAQVSTWAREHRFCGACGRATVQIRGERAMFCEHDNLRLYPRISPSMIVLVTRGDEILLARSPRFVTGMYSALAGFVEPGESAEDCVHREVMEEVQVRIKNLRYRGSQCWPFPHSMMLGFHAEYESGEIVPQAEEIEDARWFHVDDLPPLPANRSIARYLIEAYLAERSGAPEPVLPG.

Position 84 (arginine 84) interacts with substrate. Residues cysteine 114 and cysteine 117 each coordinate Zn(2+). A substrate-binding site is contributed by glutamate 127. A Zn(2+)-binding site is contributed by cysteine 132. Tyrosine 140 is a substrate binding site. In terms of domain architecture, Nudix hydrolase spans 141-264; that stretch reads PRISPSMIVL…SIARYLIEAY (124 aa). Residues alanine 174, glutamate 190, and glutamate 194 each coordinate a divalent metal cation. Positions 175–196 match the Nudix box motif; that stretch reads GFVEPGESAEDCVHREVMEEVQ. Residue 208–215 participates in substrate binding; it reads QCWPFPHS. Glutamate 235 is an a divalent metal cation binding site. Alanine 257 contributes to the substrate binding site.

Belongs to the Nudix hydrolase family. NudC subfamily. As to quaternary structure, homodimer. Mg(2+) serves as cofactor. It depends on Mn(2+) as a cofactor. The cofactor is Zn(2+).

It carries out the reaction a 5'-end NAD(+)-phospho-ribonucleoside in mRNA + H2O = a 5'-end phospho-adenosine-phospho-ribonucleoside in mRNA + beta-nicotinamide D-ribonucleotide + 2 H(+). The enzyme catalyses NAD(+) + H2O = beta-nicotinamide D-ribonucleotide + AMP + 2 H(+). The catalysed reaction is NADH + H2O = reduced beta-nicotinamide D-ribonucleotide + AMP + 2 H(+). MRNA decapping enzyme that specifically removes the nicotinamide adenine dinucleotide (NAD) cap from a subset of mRNAs by hydrolyzing the diphosphate linkage to produce nicotinamide mononucleotide (NMN) and 5' monophosphate mRNA. The NAD-cap is present at the 5'-end of some mRNAs and stabilizes RNA against 5'-processing. Has preference for mRNAs with a 5'-end purine. Catalyzes the hydrolysis of a broad range of dinucleotide pyrophosphates. In Pseudomonas syringae pv. syringae (strain B728a), this protein is NAD-capped RNA hydrolase NudC.